A 204-amino-acid chain; its full sequence is Cytochrome P450 monooxygenase PC-23 (204 aa).

Cys-138 lines the heme pocket.

It belongs to the cytochrome P450 family. It depends on heme as a cofactor.

It functions in the pathway secondary metabolite biosynthesis. Its function is as follows. Cytochrome P450 monooxygenase; part of the gene cluster that mediates the biosynthesis of the indole diterpenes penitrems. The geranylgeranyl diphosphate (GGPP) synthase penG catalyzes the first step in penitrem biosynthesis via conversion of farnesyl pyrophosphate and isopentyl pyrophosphate into geranylgeranyl pyrophosphate (GGPP). Condensation of indole-3-glycerol phosphate with GGPP by the prenyl transferase penC then forms 3-geranylgeranylindole (3-GGI). Epoxidation by the FAD-dependent monooxygenase penM leads to a epoxidized-GGI that is substrate of the terpene cyclase penB for cyclization to yield paspaline. Paspaline is subsequently converted to 13-desoxypaxilline by the cytochrome P450 monooxygenase penP, the latter being then converted to paxilline by the cytochrome P450 monooxygenase penQ. Paxilline is converted to beta-paxitriol via C-10 ketoreduction by the short-chain dehydrogenase PC-15 which can be monoprenylated at the C-20 by the indole diterpene prenyltransferase penD. A two-step elimination (acetylation and elimination) process performed by the O-acetyltransferase PC-16 and the P.simplicissimum ptmI-ortholog not yet identified in P.crustosum, leads to the production of the prenylated form of penijanthine. The FAD-linked oxidoreductase ptmO then converts the prenylated form of penijanthine into PC-M5 which is in turn transformed into PC-M4 by the aromatic dimethylallyltransferase PC-22. A series of oxidation steps involving 4 cytochrome P450 monooxygenases (PC-21, PC-05, PC-23, PC-20) and a FAD-dependent monooxygenase (PC-14) are required for the transformation of PC-M4 to penitrems A and E. Synthesis of these final products is proposed to proceed via penitrems D and C (PC-21, PC-05, PC-14) and penitrems B and F (PC-21, PC-05, PC-14, PC-23). In Penicillium crustosum (Blue mold fungus), this protein is Cytochrome P450 monooxygenase PC-23.